An 89-amino-acid polypeptide reads, in one-letter code: Small ribosomal subunit protein uS15 (89 aa).

The protein belongs to the universal ribosomal protein uS15 family. In terms of assembly, part of the 30S ribosomal subunit. Forms a bridge to the 50S subunit in the 70S ribosome, contacting the 23S rRNA.

In terms of biological role, one of the primary rRNA binding proteins, it binds directly to 16S rRNA where it helps nucleate assembly of the platform of the 30S subunit by binding and bridging several RNA helices of the 16S rRNA. Functionally, forms an intersubunit bridge (bridge B4) with the 23S rRNA of the 50S subunit in the ribosome. The polypeptide is Small ribosomal subunit protein uS15 (Lactiplantibacillus plantarum (strain ATCC BAA-793 / NCIMB 8826 / WCFS1) (Lactobacillus plantarum)).